The primary structure comprises 375 residues: Protein GOLM2 (375 aa).

The Cytoplasmic segment spans residues 1 to 12 (MVGFGANRRGGR). Residues 13–33 (LPSFLLAALLLVIAVLAFNCW) form a helical; Signal-anchor for type II membrane protein membrane-spanning segment. Positions 34–198 (NAASRQAVLR…REQKATQRIQ (165 aa)) form a coiled coil. Topologically, residues 34 to 375 (NAASRQAVLR…SKPRFGDGVL (342 aa)) are lumenal. 3 disordered regions span residues 81-102 (LEQKEADYSQLSSQLQARDGQV), 193-327 (ATQR…DSQN), and 342-375 (RAVGLQKMKQNDEERDLQNDLVDYSKPRFGDGVL). Composition is skewed to basic and acidic residues over residues 193–204 (ATQRIQSSKDAE) and 350–375 (KQNDEERDLQNDLVDYSKPRFGDGVL).

This sequence belongs to the GOLM family.

The protein localises to the membrane. This is Protein GOLM2 (GOLM2) from Gallus gallus (Chicken).